We begin with the raw amino-acid sequence, 408 residues long: Putative FBD-associated F-box protein At5g50270 (408 aa).

Residues 1 to 54 (MDRISGLPDELLLRVLSLLPNVKDVVVTMVLSKRWQFLWMMVPKLVYDDSYQNL) form the F-box domain. One can recognise an FBD domain in the interval 345–408 (PLRDDLSSVP…VNPDKKYEMI (64 aa)).

This chain is Putative FBD-associated F-box protein At5g50270, found in Arabidopsis thaliana (Mouse-ear cress).